Here is a 427-residue protein sequence, read N- to C-terminus: Inward rectifier potassium channel 2 (427 aa).

Residues 1–81 (MGSVRTNRYS…IFTTCVDIRW (81 aa)) lie on the Cytoplasmic side of the membrane. Residue Cys-76 is modified to S-nitrosocysteine. A helical transmembrane segment spans residues 82–106 (RWMLVIFCLAFVLSWLFFGCVFWLI). The Extracellular portion of the chain corresponds to 107–128 (ALLHGDLDASKEGKACVSEVNS). Residues 129–140 (FTAAFLFSIETQ) constitute an intramembrane region (helical; Pore-forming). An intramembrane region (pore-forming) is located at residues 141-147 (TTIGYGF). Positions 142–147 (TIGYGF) match the Selectivity filter motif. Topologically, residues 148 to 156 (RCVTDECPI) are extracellular. A helical membrane pass occupies residues 157 to 178 (AVFMVVFQSIVGCIIDAFIIGA). Over 179-427 (VMAKMAKPKK…PRPLRRESEI (249 aa)) the chain is Cytoplasmic. The tract at residues 181–208 (AKMAKPKKRNETLVFSHNAVIAMRDGKL) is polyphosphoinositide (PIP2)-binding. The segment at 384–427 (SKEEDDSENGVPESTSTDTPPDIDLHNQASVPLEPRPLRRESEI) is disordered. The PDZ-binding signature appears at 425–427 (SEI).

The protein belongs to the inward rectifier-type potassium channel (TC 1.A.2.1) family. KCNJ2 subfamily. Homotetramer. Homomultimeric and heteromultimeric association with KCNJ4/Kir2.3. Can form heteromeric channels with Kir2.6/KCNJ18. Associates, via its PDZ-recognition domain, with a complex containing LIN7A, LIN7B, LIN7C, DLG1, CASK and APBA1. Post-translationally, S-nitrosylation increases the open probability and inward rectifying currents.

It is found in the cell membrane. The protein localises to the sarcolemma. Its subcellular location is the T-tubule. It catalyses the reaction K(+)(in) = K(+)(out). Activated by phosphatidylinositol 4,5 biphosphate (PtdIns(4,5)P2). Functionally, inward rectifier potassium channels are characterized by a greater tendency to allow potassium to flow into the cell rather than out of it. Their voltage dependence is regulated by the concentration of extracellular potassium; as external potassium is raised, the voltage range of the channel opening shifts to more positive voltages. The inward rectification is mainly due to the blockage of outward current by internal magnesium. Can be blocked by extracellular barium or cesium. Probably participates in establishing action potential waveform and excitability of neuronal and muscle tissues. In Macaca mulatta (Rhesus macaque), this protein is Inward rectifier potassium channel 2 (KCNJ2).